We begin with the raw amino-acid sequence, 156 residues long: Endoribonuclease YbeY (156 aa).

Zn(2+)-binding residues include His122, His126, and His132.

Belongs to the endoribonuclease YbeY family. Zn(2+) serves as cofactor.

It localises to the cytoplasm. Functionally, single strand-specific metallo-endoribonuclease involved in late-stage 70S ribosome quality control and in maturation of the 3' terminus of the 16S rRNA. The chain is Endoribonuclease YbeY from Syntrophomonas wolfei subsp. wolfei (strain DSM 2245B / Goettingen).